The sequence spans 43 residues: Potassium channel toxin gamma-KTx 4.6 (43 aa).

Intrachain disulfides connect Cys-5/Cys-23, Cys-11/Cys-34, Cys-20/Cys-39, and Cys-24/Cys-41.

The protein belongs to the ergtoxin family. Gamma-KTx 4 subfamily. As to expression, expressed by the venom gland.

The protein resides in the secreted. Reversibly blocks Kv11/ERG potassium channels. The chain is Potassium channel toxin gamma-KTx 4.6 from Centruroides limpidus (Mexican scorpion).